The sequence spans 307 residues: Aspartate carbamoyltransferase catalytic subunit (307 aa).

Carbamoyl phosphate is bound by residues arginine 54 and threonine 55. Residue lysine 83 participates in L-aspartate binding. Arginine 104, histidine 132, and glutamine 135 together coordinate carbamoyl phosphate. L-aspartate is bound by residues arginine 165 and arginine 228. 2 residues coordinate carbamoyl phosphate: leucine 267 and proline 268.

The protein belongs to the aspartate/ornithine carbamoyltransferase superfamily. ATCase family. As to quaternary structure, heterododecamer (2C3:3R2) of six catalytic PyrB chains organized as two trimers (C3), and six regulatory PyrI chains organized as three dimers (R2).

The catalysed reaction is carbamoyl phosphate + L-aspartate = N-carbamoyl-L-aspartate + phosphate + H(+). The protein operates within pyrimidine metabolism; UMP biosynthesis via de novo pathway; (S)-dihydroorotate from bicarbonate: step 2/3. Catalyzes the condensation of carbamoyl phosphate and aspartate to form carbamoyl aspartate and inorganic phosphate, the committed step in the de novo pyrimidine nucleotide biosynthesis pathway. This is Aspartate carbamoyltransferase catalytic subunit from Clostridium acetobutylicum (strain ATCC 824 / DSM 792 / JCM 1419 / IAM 19013 / LMG 5710 / NBRC 13948 / NRRL B-527 / VKM B-1787 / 2291 / W).